The following is a 414-amino-acid chain: Nucleoredoxin (414 aa).

The Thioredoxin domain occupies Leu131–Gly305.

Belongs to the nucleoredoxin family.

It is found in the cytoplasm. It localises to the cytosol. Its subcellular location is the nucleus. It catalyses the reaction [protein]-dithiol + NAD(+) = [protein]-disulfide + NADH + H(+). The catalysed reaction is [protein]-dithiol + NADP(+) = [protein]-disulfide + NADPH + H(+). Functionally, functions as a redox-dependent negative regulator of the Wnt signaling pathway. This is Nucleoredoxin (nxn) from Xenopus laevis (African clawed frog).